The chain runs to 436 residues: GTPase Der (436 aa).

EngA-type G domains are found at residues 4 to 167 and 176 to 351; these read PVVA…PKEE and VKFS…DNHS. GTP-binding positions include 10-17, 57-61, 119-122, 182-189, 229-233, and 294-297; these read GRPNVGKS, DTGGI, NKVD, DTAGM, and NKWD. In terms of domain architecture, KH-like spans 352 to 436; that stretch reads LRVQSSMLND…PIRVIARKRK (85 aa).

Belongs to the TRAFAC class TrmE-Era-EngA-EngB-Septin-like GTPase superfamily. EngA (Der) GTPase family. As to quaternary structure, associates with the 50S ribosomal subunit.

Its function is as follows. GTPase that plays an essential role in the late steps of ribosome biogenesis. The sequence is that of GTPase Der from Listeria monocytogenes serotype 4b (strain F2365).